Consider the following 386-residue polypeptide: L-lactate oxidase (386 aa).

Residues 16–382 (AQAPFPICFA…RTITLVKNDG (367 aa)) form the FMN hydroxy acid dehydrogenase domain. Y42 is a binding site for pyruvate. Residues 95-97 (PVG), S124, and Q146 contribute to the FMN site. Y148 is a binding site for pyruvate. Residue T174 participates in FMN binding. R183 lines the pyruvate pocket. FMN contacts are provided by K253 and S275. Pyruvate-binding residues include H277 and R280. The Proton acceptor role is filled by H277. FMN is bound by residues 308–312 (DSGVY) and R332.

This sequence belongs to the FMN-dependent alpha-hydroxy acid dehydrogenase family. As to quaternary structure, homotetramer. FMN is required as a cofactor.

The catalysed reaction is a (2S)-2-hydroxycarboxylate + O2 = a 2-oxocarboxylate + H2O2. It catalyses the reaction (S)-lactate + O2 = pyruvate + H2O2. It carries out the reaction 2-hydroxyoctanoate + O2 = 2-oxooctanoate + H2O2. The enzyme catalyses mandelate + O2 = phenylglyoxylate + H2O2. The catalysed reaction is 2-hydroxyoctadecanoate + O2 = 2-oxooctadecanoate + H2O2. It catalyses the reaction (S)-2-hydroxyglutarate + O2 = H2O2 + 2-oxoglutarate. Functionally, oxidase that catalyzes the oxidation of a broad range of 2-hydroxyacids in vitro, such as (S)-lactate, 2-hydroxyoctanoate, mandelate, 2-hydroxyoctadecanoate and (S)-2-hydroxyglutarate, to the corresponding 2-oxoacids, with a reduction of O2 to H2O2. May be involved in the utilization of L-lactate as an energy source for growth. In Lysinibacillus sphaericus (strain C3-41), this protein is L-lactate oxidase.